The chain runs to 294 residues: Undecaprenyl-diphosphatase (294 aa).

The next 6 helical transmembrane spans lie at 39–59 (PGAA…ILYF), 93–113 (TQMG…GLLF), 123–143 (NLWI…VVDA), 197–217 (VSFL…AVSA), 234–254 (ATIA…IGFL), and 265–285 (FAIY…CGVL).

It belongs to the UppP family.

It localises to the cell membrane. The catalysed reaction is di-trans,octa-cis-undecaprenyl diphosphate + H2O = di-trans,octa-cis-undecaprenyl phosphate + phosphate + H(+). Catalyzes the dephosphorylation of undecaprenyl diphosphate (UPP). Confers resistance to bacitracin. The polypeptide is Undecaprenyl-diphosphatase (Bifidobacterium adolescentis (strain ATCC 15703 / DSM 20083 / NCTC 11814 / E194a)).